The primary structure comprises 4763 residues: Nonribosomal peptide synthetase sidC (4763 aa).

Positions 1-24 (MAGTANPADEGLTGPTETTNHINS) are disordered. A compositionally biased stretch (polar residues) spans 15–24 (PTETTNHINS). The interval 296-815 (STVAEHSTLT…SSGKVDRNSI (520 aa)) is adenylation 1. The Carrier 1 domain occupies 853 to 930 (EKALELRTLV…GLLTLILNGK (78 aa)). Ser890 is modified (O-(pantetheine 4'-phosphoryl)serine). The tract at residues 1003–1396 (TRSYIYHSVI…DIIAFILQNP (394 aa)) is condensation 1. Residues 1398-1951 (GDFENALLYT…AKTDRRALQA (554 aa)) are adenylation 2. The region spanning 1979-2055 (LVASDAMEKI…DLARLCTSSS (77 aa)) is the Carrier 2 domain. Ser2016 bears the O-(pantetheine 4'-phosphoryl)serine mark. The condensation 2 stretch occupies residues 2092 to 2423 (TPIQESLLSE…HIHAREVRRM (332 aa)). The adenylation 3 stretch occupies residues 2556 to 3070 (ELNAREHPEW…MSGKANIKEL (515 aa)). The Carrier 3 domain occupies 3099–3175 (RPLSSDEEAV…QLAQLPRKST (77 aa)). Position 3136 is an O-(pantetheine 4'-phosphoryl)serine (Ser3136). Positions 3217 to 3626 (PLQEGLVARS…DDIALDSFSL (410 aa)) are condensation 3. A Carrier 4 domain is found at 3647–3720 (SATETKIRDL…ALAEHVDERS (74 aa)). Ser3681 carries the O-(pantetheine 4'-phosphoryl)serine modification. The condensation 4 stretch occupies residues 3761-4093 (TPLQAGMITR…SLFDTLFVFQ (333 aa)). The Carrier 5 domain occupies 4204–4277 (PAHESIIRDV…GISARIISPV (74 aa)). Ser4238 is modified (O-(pantetheine 4'-phosphoryl)serine). The segment at 4344–4593 (ERIDSGKLEE…PCLNVTPFTF (250 aa)) is condensation 5.

This sequence belongs to the NRP synthetase family.

Its pathway is siderophore biosynthesis. Its function is as follows. Nonribosomal peptide synthase; part of the siderophore biosynthetic pathway. Aspergillus fumigatus produces four types of siderophores, low-molecular-mass iron chelators, including excreted fusarinine C (FsC) and triacetylfusarinine C (TAFC) for iron uptake; and intacellular ferricrocin (FC) for hyphal and hydroxyferricrocin (HFC) for conidial iron distribution and storage. TAFC consists of three N(2)-acetyl-N(5)-anhydromevalonyl-N(5)-hydroxyornithine residues cyclically linked by ester bonds; FC is a cyclic hexapeptide with the structure Gly-Ser-Gly-(N(5)-acetyl-N(5)-hydroxyornithine)x3. The biosynthesis of all four siderophores depends on the hydroxylation of ornithine, catalyzed by the monooxygenase sidA. Subsequently, the pathways for biosynthesis of extra- and intracellular siderophores split. For biosynthesis of extracellular siderophores, the transacylase sidF transfers anhydromevalonyl to N(5)-hydroxyornithine. The required anhydromevalonyl-CoA moiety is derived from mevalonate by CoA ligation and dehydration catalyzed by sidI and sidH respectively. The acetylation of N(5)-hydroxyornithine for FC biosynthesis involves the constitutively expressed sidL. FC is hydroxylated to HFC by an as yet uncharacterized enzyme during conidiation. Assembly of fusarinine C (FsC) and FC is catalyzed by two different nonribosomal peptide synthetases (NRPS), sidD and sidC respectively. Subsequently, sidG catalyzes N2-acetylation of FsC for forming TAFC. Both extra- and intracellular siderophores are crucial for growth during iron limitation and virulence. This is Nonribosomal peptide synthetase sidC from Aspergillus fumigatus (strain ATCC MYA-4609 / CBS 101355 / FGSC A1100 / Af293) (Neosartorya fumigata).